Reading from the N-terminus, the 275-residue chain is MNTSHYSVLGHTVPYPKVYDPSLLFPISRAVGRTQIGIGVVLPFVGEDRWHAYELSWLDARGKPCVATATFHVPCDSPYLIESKSLKLYLNSFSAEVFNRAEALRLRIAADLSACAGAAVAVEFGLPPVGGGDKEISLDRLNVDIEDYGPPNPDYLSNVAQNFVEEMVEETLTSTLFKSNCPVTGQPDWASVTVRYFGVPIDHEGLLRYFISFRHHAEFHEQCVERIFQDVLQRCAPQCLAVEARYTRRGGLDINPLRTTSEMAWPLSVFRDPRQ.

81 to 83 (IES) serves as a coordination point for substrate. NADPH is bound at residue 83–84 (SK). The Thioimide intermediate role is filled by C181. Catalysis depends on D188, which acts as the Proton donor. Residue 220–221 (HE) participates in substrate binding. Position 249-250 (249-250 (RG)) interacts with NADPH.

This sequence belongs to the GTP cyclohydrolase I family. QueF type 2 subfamily. In terms of assembly, homodimer.

It is found in the cytoplasm. The catalysed reaction is 7-aminomethyl-7-carbaguanine + 2 NADP(+) = 7-cyano-7-deazaguanine + 2 NADPH + 3 H(+). It functions in the pathway tRNA modification; tRNA-queuosine biosynthesis. Its function is as follows. Catalyzes the NADPH-dependent reduction of 7-cyano-7-deazaguanine (preQ0) to 7-aminomethyl-7-deazaguanine (preQ1). This is NADPH-dependent 7-cyano-7-deazaguanine reductase from Xylella fastidiosa (strain M12).